Reading from the N-terminus, the 218-residue chain is Ras-related protein RabT2 (218 aa).

32 to 39 (GDYKTGKG) is a GTP binding site. Positions 54–61 (VSSIGVDF) match the Effector region motif. GTP-binding positions include 80–84 (DANSC) and 140–143 (NKCD). Cys215 is modified (cysteine methyl ester). Residue Cys215 is the site of S-geranylgeranyl cysteine attachment. Positions 216 to 218 (NIL) are cleaved as a propeptide — removed in mature form.

The protein belongs to the small GTPase superfamily. Rab family.

It localises to the cell membrane. The protein is Ras-related protein RabT2 (rabT2) of Dictyostelium discoideum (Social amoeba).